A 687-amino-acid chain; its full sequence is Methionine--tRNA ligase (687 aa).

Residues 14 to 24 (PYANGYIHLGH) carry the 'HIGH' region motif. Zn(2+) is bound by residues Cys-145, Cys-148, Cys-158, and Cys-161. A 'KMSKS' region motif is present at residues 329–333 (KMSKS). Lys-332 provides a ligand contact to ATP. One can recognise a tRNA-binding domain in the interval 585-687 (DFDKVDLRIG…DGAQVGQRVK (103 aa)).

Belongs to the class-I aminoacyl-tRNA synthetase family. MetG type 1 subfamily. In terms of assembly, homodimer. Zn(2+) serves as cofactor.

The protein resides in the cytoplasm. The catalysed reaction is tRNA(Met) + L-methionine + ATP = L-methionyl-tRNA(Met) + AMP + diphosphate. In terms of biological role, is required not only for elongation of protein synthesis but also for the initiation of all mRNA translation through initiator tRNA(fMet) aminoacylation. The chain is Methionine--tRNA ligase from Bdellovibrio bacteriovorus (strain ATCC 15356 / DSM 50701 / NCIMB 9529 / HD100).